The following is a 436-amino-acid chain: Prenyltransferase nscD (436 aa).

Belongs to the tryptophan dimethylallyltransferase family.

It functions in the pathway secondary metabolite biosynthesis. Functionally, prenyltransferase; part of the gene cluster that mediates the biosynthesis of neosartoricin B, a prenylated anthracenone that probably exhibits T-cell antiproliferative activity, suggestive of a physiological role as an immunosuppressive agent. The non-reducing polyketide synthase nscA probably synthesizes and cyclizes the decaketide backbone. The hydrolase nscB then mediates the product release through hydrolysis followed by spontaneous decarboxylation. The prenyltransferase nscD catalyzes the addition of the dimethylallyl group to the aromatic C5. The FAD-dependent monooxygenase nscC is then responsible for the stereospecific hydroxylation at C2. Neosartoricin B can be converted into two additional compounds neosartoricins C and D. Neosartoricin C is a spirocyclic compound that is cyclized through the attack of C3 hydroxyl on C14, followed by dehydration. On the other hand, neosartoricin D is a further cyclized compound in which attack of C2 on C14 in neosartoricin C results in the formation of the acetal-containing dioxabicyclo-octanone ring. Both of these compounds are novel and possibly represent related metabolites of the gene cluster. The polypeptide is Prenyltransferase nscD (Trichophyton tonsurans (strain CBS 112818) (Scalp ringworm fungus)).